A 432-amino-acid polypeptide reads, in one-letter code: Eukaryotic translation initiation factor 3 subunit E (432 aa).

One can recognise a PCI domain in the interval 221-401; the sequence is VYYNYPKGRD…MGVKSVSIHE (181 aa).

The protein belongs to the eIF-3 subunit E family. In terms of assembly, component of the eukaryotic translation initiation factor 3 (eIF-3) complex.

It is found in the cytoplasm. Its function is as follows. Component of the eukaryotic translation initiation factor 3 (eIF-3) complex, which is involved in protein synthesis of a specialized repertoire of mRNAs and, together with other initiation factors, stimulates binding of mRNA and methionyl-tRNAi to the 40S ribosome. The eIF-3 complex specifically targets and initiates translation of a subset of mRNAs involved in cell proliferation. This chain is Eukaryotic translation initiation factor 3 subunit E, found in Caenorhabditis elegans.